The chain runs to 1227 residues: Pre-mRNA-splicing factor ATP-dependent RNA helicase PRP16 (1227 aa).

Position 2 is an N-acetylglycine (G2). At S56 the chain carries Phosphoserine. Positions 60–89 (REREEKDDGEDKKKSKVSSYKDWEESKDDQ) are enriched in basic and acidic residues. Residues 60–320 (REREEKDDGE…ERQQWEDDQR (261 aa)) form a disordered region. T117 is subject to Phosphothreonine. Basic and acidic residues predominate over residues 128-201 (FWERSRQRER…SRRNEPESPR (74 aa)). Phosphoserine occurs at positions 199 and 224. Over residues 222–239 (YGSSRRSQWESPSPTPSY) the composition is skewed to polar residues. Residues 240–263 (RDSERSHRLSTRDRDRSVRGKYSD) show a composition bias toward basic and acidic residues. The residue at position 260 (K260) is an N6-acetyllysine. The segment covering 300-310 (GEEGISFDTEE) has biased composition (acidic residues). Residues 311–320 (ERQQWEDDQR) are compositionally biased toward basic and acidic residues. Residues K482, K483, and K504 each participate in a glycyl lysine isopeptide (Lys-Gly) (interchain with G-Cter in SUMO2) cross-link. The Helicase ATP-binding domain occupies 542–705 (LTIIRDNSIV…FGNVPIFHIP (164 aa)). Residue 555–562 (GETGSGKT) participates in ATP binding. A DEAH box motif is present at residues 652-655 (DEAH). A Helicase C-terminal domain is found at 727 to 902 (AVKQSLQVHL…NVVLLLKSLG (176 aa)). The segment at 1155 to 1227 (GKSRQENRRR…PRRTPARFGL (73 aa)) is disordered. 2 stretches are compositionally biased toward basic and acidic residues: residues 1157 to 1169 (SRQE…KEEA) and 1181 to 1194 (EQLR…EKRS). Residue K1166 forms a Glycyl lysine isopeptide (Lys-Gly) (interchain with G-Cter in SUMO2) linkage. Residue S1194 is modified to Phosphoserine.

This sequence belongs to the DEAD box helicase family. DEAH subfamily. PRP16 sub-subfamily. Identified in the spliceosome C complex.

It is found in the nucleus. The enzyme catalyses ATP + H2O = ADP + phosphate + H(+). Probable ATP-binding RNA helicase. Involved in pre-mRNA splicing as component of the spliceosome. This Homo sapiens (Human) protein is Pre-mRNA-splicing factor ATP-dependent RNA helicase PRP16 (DHX38).